The following is a 326-amino-acid chain: NDRG-like protein (326 aa).

It belongs to the NDRG family.

In Dictyostelium discoideum (Social amoeba), this protein is NDRG-like protein.